The sequence spans 285 residues: Shikimate dehydrogenase (NADP(+)) (285 aa).

Residues 20 to 22 and S67 contribute to the shikimate site; that span reads SIS. The Proton acceptor role is filled by K71. 2 residues coordinate shikimate: N92 and D107. NADP(+) is bound by residues 129–133 and I227; that span reads GAGGA. Position 229 (Y229) interacts with shikimate. Residue G250 participates in NADP(+) binding.

Belongs to the shikimate dehydrogenase family. In terms of assembly, homodimer.

The catalysed reaction is shikimate + NADP(+) = 3-dehydroshikimate + NADPH + H(+). It participates in metabolic intermediate biosynthesis; chorismate biosynthesis; chorismate from D-erythrose 4-phosphate and phosphoenolpyruvate: step 4/7. In terms of biological role, involved in the biosynthesis of the chorismate, which leads to the biosynthesis of aromatic amino acids. Catalyzes the reversible NADPH linked reduction of 3-dehydroshikimate (DHSA) to yield shikimate (SA). In Streptococcus thermophilus (strain ATCC BAA-491 / LMD-9), this protein is Shikimate dehydrogenase (NADP(+)).